The sequence spans 590 residues: MNIYRTHLCDQLRKEHINQEVTLSGWIYRKRDHGKIIFVDLRDHYGITQLVFNEADNQNFQLITHLRLESVITVKGIVVARDSSTINTAVSTGFIEVVVKHVIIEGEADPLPLNITSTQDYPEEIRLKYRFLDLRRDKVKNNIILRSKIISELRKSMEAMGFIEIQTPILTSSSPEGARDYLVPSRIHHGKFYALPQAPQLFKQILMVSGFDKYFQIAPCFRDEDARSDRSPGEFYQLDIEMSFVSQEDVFNVIEPVLLNVFSKFSNKTIDKEFPRISYHDAMLHYGSDKPDLRNPLIIQDVTEIFRDSQFNIFNSNIKQGMVVRAIPAPNTATNPRSFFDNKIEFAKTLGAQGLGYITFNDDFSAKGPIAKFLDEERLNRIKSICNLQPGDSVFFVSETEDKATELAGEVRTLLGKELNLIEKDTFRFCWIIDFPYFKYDKKEKSINFFHNPFSMPQGGLEALNNQNPLDILAYQYDIVCNGIEISSGAIRNHKLDIMYKAFSIAGYTKEMVDQKFNSLTRAFKFGAPPHGGIAPGIDRMVMLLADATNIREVICFPLNQSGEDLLMSAPSEIDKEHLKLLSLSITKKS.

An L-aspartate-binding site is contributed by glutamate 176. An aspartate region spans residues 200–203; it reads QLFK. L-aspartate-binding residues include arginine 222 and histidine 451. Position 222-224 (222-224) interacts with ATP; the sequence is RDE. Glutamate 485 lines the ATP pocket. An L-aspartate-binding site is contributed by arginine 492. Residue 537–540 participates in ATP binding; the sequence is GIDR.

This sequence belongs to the class-II aminoacyl-tRNA synthetase family. Type 1 subfamily. In terms of assembly, homodimer.

The protein localises to the cytoplasm. The catalysed reaction is tRNA(Asx) + L-aspartate + ATP = L-aspartyl-tRNA(Asx) + AMP + diphosphate. Its function is as follows. Aspartyl-tRNA synthetase with relaxed tRNA specificity since it is able to aspartylate not only its cognate tRNA(Asp) but also tRNA(Asn). Reaction proceeds in two steps: L-aspartate is first activated by ATP to form Asp-AMP and then transferred to the acceptor end of tRNA(Asp/Asn). In Ehrlichia chaffeensis (strain ATCC CRL-10679 / Arkansas), this protein is Aspartate--tRNA(Asp/Asn) ligase.